The primary structure comprises 156 residues: 6,7-dimethyl-8-ribityllumazine synthase (156 aa).

5-amino-6-(D-ribitylamino)uracil contacts are provided by residues phenylalanine 22, alanine 57 to glutamate 59, and cysteine 81 to isoleucine 83. Residue glycine 86–threonine 87 participates in (2S)-2-hydroxy-3-oxobutyl phosphate binding. Histidine 89 (proton donor) is an active-site residue. Phenylalanine 114 is a 5-amino-6-(D-ribitylamino)uracil binding site. Arginine 128 contributes to the (2S)-2-hydroxy-3-oxobutyl phosphate binding site.

It belongs to the DMRL synthase family. In terms of assembly, forms an icosahedral capsid composed of 60 subunits, arranged as a dodecamer of pentamers.

The enzyme catalyses (2S)-2-hydroxy-3-oxobutyl phosphate + 5-amino-6-(D-ribitylamino)uracil = 6,7-dimethyl-8-(1-D-ribityl)lumazine + phosphate + 2 H2O + H(+). Its pathway is cofactor biosynthesis; riboflavin biosynthesis; riboflavin from 2-hydroxy-3-oxobutyl phosphate and 5-amino-6-(D-ribitylamino)uracil: step 1/2. In terms of biological role, catalyzes the formation of 6,7-dimethyl-8-ribityllumazine by condensation of 5-amino-6-(D-ribitylamino)uracil with 3,4-dihydroxy-2-butanone 4-phosphate. This is the penultimate step in the biosynthesis of riboflavin. The sequence is that of 6,7-dimethyl-8-ribityllumazine synthase from Tolumonas auensis (strain DSM 9187 / NBRC 110442 / TA 4).